The primary structure comprises 365 residues: Pre-mRNA-splicing factor srp2 (365 aa).

RRM domains are found at residues 6–69 (LFVG…RIVV) and 100–166 (LIVE…AVTL). Residues 166–365 (LREDPDAANE…SAEGQVAAEW (200 aa)) form a disordered region. The segment covering 184–194 (FRSRSPPARRR) has biased composition (basic residues). 7 positions are modified to phosphoserine: Ser186, Ser188, Ser276, Ser294, Ser296, Ser298, and Ser308. A compositionally biased stretch (basic and acidic residues) spans 195 to 307 (YRDDYRRGGD…SPRRDREENR (113 aa)). Over residues 316-332 (SYSAAPEASMESSAPTE) the composition is skewed to low complexity. Polar residues predominate over residues 341-353 (EEQQPLQNHSDVG).

This sequence belongs to the splicing factor SR family. Post-translationally, extensively phosphorylated on serine residues in the RS domain.

It localises to the nucleus. Has a role in pre-mRNA splicing where it is involved in spliceosome assembly. The protein is Pre-mRNA-splicing factor srp2 (srp2) of Schizosaccharomyces pombe (strain 972 / ATCC 24843) (Fission yeast).